The sequence spans 370 residues: MTNANVDATQLTTKPSQDGFYMPAEWAAQQAVWMIWPYRPDNWRSAGAYAQATFAKVADAIGGATPVYMGVPQAFLAEAQKVMPSHVTLVEIDSNDCWARDTGPTVVVNAEGECRGVDWGFNAWGGHNGGLYFPWDKDEQVAAQMLKQHGFARYSAPLILEGGSIHVDGEGTCMTTAECLLNANRNPDLTKEQIEALLRDYLNVKQFIWLEEGVYMDETDGHIDNMCCFARPGEVVLHWTDDETDPQYPRSKAALDVLQNTVDAQGRKLKIHLLPQPGPLYCTEEESKGVTEGTGVPRTAGERLAGSYVNFLITNDRIVFPLLDPATDDIAAQKLQDIFPEHKIVGVPAREILLGGGNIHCITQQIPSGK.

Cys-361 (amidino-cysteine intermediate) is an active-site residue.

The protein belongs to the agmatine deiminase family.

It catalyses the reaction agmatine + H2O = N-carbamoylputrescine + NH4(+). The polypeptide is Putative agmatine deiminase (Shewanella sp. (strain MR-7)).